Consider the following 310-residue polypeptide: Probable GTP 3',8-cyclase (310 aa).

The 214-residue stretch at 5–218 (KYGRSLQKLR…VNIIFELGGR (214 aa)) folds into the Radical SAM core domain. Arginine 14 provides a ligand contact to GTP. Cysteine 21, cysteine 25, and cysteine 28 together coordinate [4Fe-4S] cluster. Lysine 62 is a binding site for GTP. Glycine 66 is a binding site for S-adenosyl-L-methionine. Threonine 91 is a binding site for GTP. Serine 115 lines the S-adenosyl-L-methionine pocket. GTP is bound at residue lysine 153. Positions 251, 254, and 268 each coordinate [4Fe-4S] cluster.

This sequence belongs to the radical SAM superfamily. MoaA family. Requires [4Fe-4S] cluster as cofactor.

It carries out the reaction GTP + AH2 + S-adenosyl-L-methionine = (8S)-3',8-cyclo-7,8-dihydroguanosine 5'-triphosphate + 5'-deoxyadenosine + L-methionine + A + H(+). It functions in the pathway cofactor biosynthesis; molybdopterin biosynthesis. Its function is as follows. Catalyzes the cyclization of GTP to (8S)-3',8-cyclo-7,8-dihydroguanosine 5'-triphosphate. The sequence is that of Probable GTP 3',8-cyclase from Pyrobaculum aerophilum (strain ATCC 51768 / DSM 7523 / JCM 9630 / CIP 104966 / NBRC 100827 / IM2).